Here is a 589-residue protein sequence, read N- to C-terminus: Putative sphingomyelin phosphodiesterase asm-3 (589 aa).

Residues 1 to 17 (MLLGLLVLSLAFQGTLA) form the signal peptide. One can recognise a Saposin B-type domain in the interval 18–101 (VTECEECKSI…LMKNDCGDFV (84 aa)). Intrachain disulfides connect C21–C97, C24–C89, and C52–C63. An N-linked (GlcNAc...) asparagine glycan is attached at N109. The Zn(2+) site is built by D139 and H141. 2 disulfides stabilise this stretch: C154/C159 and C160/C188. D217 contributes to the Zn(2+) binding site. N-linked (GlcNAc...) asparagine glycosylation is present at N237. N257 serves as a coordination point for Zn(2+). N-linked (GlcNAc...) asparagine glycosylation occurs at N334. Positions 364, 398, and 400 each coordinate Zn(2+). N-linked (GlcNAc...) asparagine glycosylation is present at N463. 2 disulfide bridges follow: C530–C535 and C541–C553. A disordered region spans residues 562–589 (KPEPKKNKYSARFATSNERRRGKEECKI). Over residues 578-589 (NERRRGKEECKI) the composition is skewed to basic and acidic residues.

Belongs to the acid sphingomyelinase family. Requires Zn(2+) as cofactor.

Its subcellular location is the secreted. It carries out the reaction an N-(acyl)-sphingosylphosphocholine + H2O = an N-acyl-sphingoid base + phosphocholine + H(+). The enzyme catalyses a sphingomyelin + H2O = phosphocholine + an N-acylsphing-4-enine + H(+). The catalysed reaction is an N-acyl-15-methylhexadecasphing-4-enine-1-phosphocholine + H2O = an N-acyl-15-methylhexadecasphing-4-enine + phosphocholine + H(+). It participates in lipid metabolism; sphingolipid metabolism. Its function is as follows. Converts sphingomyelin to ceramide (N-acyl-sphingoid base) and phosphocholine. C.elegans contain specific sphingoid bases, which are unique or different in structure compared to the sphingoid bases found in other animals. Two examples of these distinctive compounds are: 15-methylhexadecasphinganine and 15-methylhexadecasphing-4-enine. The protein is Putative sphingomyelin phosphodiesterase asm-3 (asm-3) of Caenorhabditis elegans.